We begin with the raw amino-acid sequence, 472 residues long: Mitochondrial substrate carrier family protein C (472 aa).

Topologically, residues 1 to 189 (MVLNENDKEF…ASSLRNTITY (189 aa)) are mitochondrial intermembrane. 4 consecutive EF-hand domains span residues 6-41 (NDKEFVKKLFDSLDKDNNGKLTREEIKEGFFKLRIP), 42-70 (SSEKDIESFLTNVDKDKDGSVSFKEFEDF), 73-108 (ENIKKLKIVFEELDTNKSGTLDIHEIEESIKKLNIP), and 110-145 (YSEQELIRLFHRIDKNRDNQIDFNEWRELLVLLPNS). Ca(2+) contacts are provided by D19, D21, N23, K25, E30, D55, D57, D59, S61, E66, D86, N88, S90, T92, E97, D123, N125, D127, Q129, and E134. Solcar repeat units lie at residues 184 to 268 (RNTI…VKKL), 276 to 362 (LTSA…LKHK), and 375 to 461 (GQLL…FKKA). Residues 190-207 (MLAGSVAGFASRTSTAPL) traverse the membrane as a helical segment. At 208 to 242 (ERVKIMCQLNHGKPISLISAFKACYKDGGIKGFFR) the chain is on the mitochondrial matrix side. A helical membrane pass occupies residues 243–263 (GNLANIIKVSPESAVKFGTYE). The Mitochondrial intermembrane portion of the chain corresponds to 264–281 (YVKKLFAENDCELTSAQR). The chain crosses the membrane as a helical span at residues 282–302 (FISGSVAGVVSHTTLFPLEVV). The Mitochondrial matrix segment spans residues 303–330 (RLRLSAEIAGTYNGIFDCFKKIAISEKS). Residues 331–351 (IRPFYRGLGASITATIPHSGV) traverse the membrane as a helical segment. Over 352–377 (NMMVYEFLKHKVIKMTGNEFPTAGQL) the chain is Mitochondrial intermembrane. A helical transmembrane segment spans residues 378–398 (LVCASTSSVCGQLVGYPFHVV). Residues 399 to 441 (KSRLITQGSSVNQEKYTGLFDGLTKIIKKEGPIGLYKGIVPSF) lie on the Mitochondrial matrix side of the membrane. Residues 442-462 (MKSIPSHSITFIVYEGFKKAF) traverse the membrane as a helical segment. The Mitochondrial intermembrane segment spans residues 463 to 472 (DVNLKEKKHH).

It belongs to the mitochondrial carrier (TC 2.A.29) family.

Its subcellular location is the mitochondrion inner membrane. Functionally, calcium-dependent mitochondrial solute carrier. Mitochondrial solute carriers shuttle metabolites, nucleotides, and cofactors through the mitochondrial inner membrane. The sequence is that of Mitochondrial substrate carrier family protein C (mcfC) from Dictyostelium discoideum (Social amoeba).